The primary structure comprises 176 residues: Peptide methionine sulfoxide reductase MsrA (176 aa).

Residue Cys-10 is part of the active site.

Belongs to the MsrA Met sulfoxide reductase family.

The catalysed reaction is L-methionyl-[protein] + [thioredoxin]-disulfide + H2O = L-methionyl-(S)-S-oxide-[protein] + [thioredoxin]-dithiol. The enzyme catalyses [thioredoxin]-disulfide + L-methionine + H2O = L-methionine (S)-S-oxide + [thioredoxin]-dithiol. Functionally, has an important function as a repair enzyme for proteins that have been inactivated by oxidation. Catalyzes the reversible oxidation-reduction of methionine sulfoxide in proteins to methionine. The polypeptide is Peptide methionine sulfoxide reductase MsrA (Chromobacterium violaceum (strain ATCC 12472 / DSM 30191 / JCM 1249 / CCUG 213 / NBRC 12614 / NCIMB 9131 / NCTC 9757 / MK)).